Consider the following 308-residue polypeptide: MMQANLLPLVIHPEVKAALESRHAVVALESNVITHGLNYPANVETALAVEAAVRRSGAVPATIGICDGEILVGMHREQIERFATTPGIAKVSSNNLPFVLAQKSMGATTVASSLMLAELAGIGFFASAGIGGVHRGGEDSMDISSDLIQFTRTNVTVVCAGAKNILDIGRTLEFLETQCVPVVTYQTDDFPAFYCRSSGYRSPQRLDSLEAIAQAIDINRALPGSAAMVVAAPTKPEDAIDSRDVQAAIQAAIENAAAKGVTGSQVTKFIMKAVEQATHGRSAMANAAVLVNTAEIAGQLAMVYHRPR.

E29 (proton donor) is an active-site residue. Substrate contacts are provided by K90 and V110. D142 serves as a coordination point for Mn(2+). Substrate is bound at residue 144 to 146; it reads SSD. K163 (nucleophile) is an active-site residue.

Belongs to the pseudouridine-5'-phosphate glycosidase family. As to quaternary structure, homotrimer. It depends on Mn(2+) as a cofactor.

The catalysed reaction is D-ribose 5-phosphate + uracil = psi-UMP + H2O. Its function is as follows. Catalyzes the reversible cleavage of pseudouridine 5'-phosphate (PsiMP) to ribose 5-phosphate and uracil. Functions biologically in the cleavage direction, as part of a pseudouridine degradation pathway. The chain is Pseudouridine-5'-phosphate glycosidase from Serratia proteamaculans (strain 568).